A 201-amino-acid chain; its full sequence is Large ribosomal subunit protein bL12m (201 aa).

A mitochondrion-targeting transit peptide spans 1-38 (MLPVAASRCLWGPRLGLRGAALRLARQQMPSVCAARQL). Disordered stretches follow at residues 37 to 60 (QLRS…APKE) and 109 to 130 (VSAA…QKER). N6-acetyllysine is present on residues lysine 128, lysine 141, lysine 145, and lysine 147. Lysine 153 bears the N6-acetyllysine; alternate mark. Residue lysine 153 is modified to N6-succinyllysine; alternate. Lysine 153 participates in a covalent cross-link: Glycyl lysine isopeptide (Lys-Gly) (interchain with G-Cter in ubiquitin). Position 165 is an N6-succinyllysine (lysine 165). N6-acetyllysine is present on residues lysine 166 and lysine 176. Lysine 181 carries the post-translational modification N6-acetyllysine; alternate. At lysine 181 the chain carries N6-succinyllysine; alternate. Lysine 188 bears the N6-acetyllysine mark.

Belongs to the bacterial ribosomal protein bL12 family. In terms of assembly, component of the mitochondrial ribosome large subunit (39S) which comprises a 16S rRNA and about 50 distinct proteins. Interacts with NOA1. Post-translationally, two mature forms are produced by differential two-step proteolytic cleavage. Cleaved by the mitochondrial processing protease to produce the long mature form and subsequently by the mitochondrial intermediate protease to produce the short mature form. In the presence of CUL3, undergoes 'Lys-63'-linked ubiquitination at Lys-153 which results in proteasomal degradation.

The protein localises to the mitochondrion matrix. Its function is as follows. As a component of the mitochondrial large ribosomal subunit, plays a role in mitochondrial translation. When present in mitochondria as a free protein not associated with the ribosome, associates with mitochondrial RNA polymerase POLRMT to activate transcription. Required for POLRMT stability. In Mus musculus (Mouse), this protein is Large ribosomal subunit protein bL12m (Mrpl12).